Here is a 340-residue protein sequence, read N- to C-terminus: Glyceraldehyde-3-phosphate dehydrogenase (340 aa).

NAD(+) contacts are provided by residues 11–12 (SI) and glycine 111. 140–142 (SCN) contacts D-glyceraldehyde 3-phosphate. Cysteine 141 functions as the Nucleophile in the catalytic mechanism. Residue arginine 169 coordinates NAD(+). 195 to 196 (HG) is a D-glyceraldehyde 3-phosphate binding site. Residue glutamine 303 participates in NAD(+) binding.

The protein belongs to the glyceraldehyde-3-phosphate dehydrogenase family. As to quaternary structure, homotetramer.

Its subcellular location is the cytoplasm. The catalysed reaction is D-glyceraldehyde 3-phosphate + phosphate + NADP(+) = (2R)-3-phospho-glyceroyl phosphate + NADPH + H(+). It catalyses the reaction D-glyceraldehyde 3-phosphate + phosphate + NAD(+) = (2R)-3-phospho-glyceroyl phosphate + NADH + H(+). It functions in the pathway carbohydrate degradation; glycolysis; pyruvate from D-glyceraldehyde 3-phosphate: step 1/5. In Methanococcus maripaludis (strain DSM 14266 / JCM 13030 / NBRC 101832 / S2 / LL), this protein is Glyceraldehyde-3-phosphate dehydrogenase.